Consider the following 367-residue polypeptide: D-alanine--D-alanine ligase (367 aa).

The region spanning 141-346 (KNLFAQAGLR…YPELIERLIA (206 aa)) is the ATP-grasp domain. Residue 174 to 229 (ERELGYPCFVKPANAGSSVGISKCKQRGDLKAAFIEAFQYDRKIIIEEAIVGREIE) coordinates ATP. The Mg(2+) site is built by aspartate 300, glutamate 313, and asparagine 315.

Belongs to the D-alanine--D-alanine ligase family. Mg(2+) is required as a cofactor. Requires Mn(2+) as cofactor.

The protein resides in the cytoplasm. It carries out the reaction 2 D-alanine + ATP = D-alanyl-D-alanine + ADP + phosphate + H(+). The protein operates within cell wall biogenesis; peptidoglycan biosynthesis. Functionally, cell wall formation. The protein is D-alanine--D-alanine ligase of Geobacillus kaustophilus (strain HTA426).